The sequence spans 387 residues: Chaperone protein DnaJ (387 aa).

Residues 4-68 enclose the J domain; the sequence is DFYDVLGVSR…EKRQMYDQLG (65 aa). Residues 76-135 are disordered; the sequence is EKRGGVGGGGNSSGGSARGDPFGGMGGQGSPFGDIFEQFFGGGQGQRRQGNRPRQGQNLQ. The segment covering 80–105 has biased composition (gly residues); it reads GVGGGGNSSGGSARGDPFGGMGGQGS. The segment covering 121 to 133 has biased composition (low complexity); the sequence is QRRQGNRPRQGQN. The segment at 148 to 230 adopts a CR-type zinc-finger fold; sequence GVEKQFTVRR…CNGDGVTRQE (83 aa). Residues Cys161, Cys164, Cys178, Cys181, Cys204, Cys207, Cys218, and Cys221 each contribute to the Zn(2+) site. 4 CXXCXGXG motif repeats span residues 161–168, 178–185, 204–211, and 218–225; these read CPDCNGRG, CPQCNGQG, CPRCDGSG, and CSTCNGDG.

The protein belongs to the DnaJ family. As to quaternary structure, homodimer. Zn(2+) is required as a cofactor.

The protein localises to the cytoplasm. Functionally, participates actively in the response to hyperosmotic and heat shock by preventing the aggregation of stress-denatured proteins and by disaggregating proteins, also in an autonomous, DnaK-independent fashion. Unfolded proteins bind initially to DnaJ; upon interaction with the DnaJ-bound protein, DnaK hydrolyzes its bound ATP, resulting in the formation of a stable complex. GrpE releases ADP from DnaK; ATP binding to DnaK triggers the release of the substrate protein, thus completing the reaction cycle. Several rounds of ATP-dependent interactions between DnaJ, DnaK and GrpE are required for fully efficient folding. Also involved, together with DnaK and GrpE, in the DNA replication of plasmids through activation of initiation proteins. This is Chaperone protein DnaJ from Haloquadratum walsbyi (strain DSM 16790 / HBSQ001).